The primary structure comprises 380 residues: Lipid-A-disaccharide synthase (380 aa).

Belongs to the LpxB family.

The enzyme catalyses a lipid X + a UDP-2-N,3-O-bis[(3R)-3-hydroxyacyl]-alpha-D-glucosamine = a lipid A disaccharide + UDP + H(+). It participates in bacterial outer membrane biogenesis; LPS lipid A biosynthesis. Functionally, condensation of UDP-2,3-diacylglucosamine and 2,3-diacylglucosamine-1-phosphate to form lipid A disaccharide, a precursor of lipid A, a phosphorylated glycolipid that anchors the lipopolysaccharide to the outer membrane of the cell. This Vibrio vulnificus (strain CMCP6) protein is Lipid-A-disaccharide synthase.